The chain runs to 261 residues: Imidazole glycerol phosphate synthase subunit HisF (261 aa).

Active-site residues include Asp-16 and Asp-135.

It belongs to the HisA/HisF family. Heterodimer of HisH and HisF.

The protein resides in the cytoplasm. The enzyme catalyses 5-[(5-phospho-1-deoxy-D-ribulos-1-ylimino)methylamino]-1-(5-phospho-beta-D-ribosyl)imidazole-4-carboxamide + L-glutamine = D-erythro-1-(imidazol-4-yl)glycerol 3-phosphate + 5-amino-1-(5-phospho-beta-D-ribosyl)imidazole-4-carboxamide + L-glutamate + H(+). It participates in amino-acid biosynthesis; L-histidine biosynthesis; L-histidine from 5-phospho-alpha-D-ribose 1-diphosphate: step 5/9. In terms of biological role, IGPS catalyzes the conversion of PRFAR and glutamine to IGP, AICAR and glutamate. The HisF subunit catalyzes the cyclization activity that produces IGP and AICAR from PRFAR using the ammonia provided by the HisH subunit. The sequence is that of Imidazole glycerol phosphate synthase subunit HisF from Mycolicibacterium smegmatis (strain ATCC 700084 / mc(2)155) (Mycobacterium smegmatis).